Here is a 467-residue protein sequence, read N- to C-terminus: 3-isopropylmalate dehydratase large subunit (467 aa).

Cys347, Cys408, and Cys411 together coordinate [4Fe-4S] cluster.

It belongs to the aconitase/IPM isomerase family. LeuC type 1 subfamily. As to quaternary structure, heterodimer of LeuC and LeuD. [4Fe-4S] cluster serves as cofactor.

The enzyme catalyses (2R,3S)-3-isopropylmalate = (2S)-2-isopropylmalate. It functions in the pathway amino-acid biosynthesis; L-leucine biosynthesis; L-leucine from 3-methyl-2-oxobutanoate: step 2/4. Its function is as follows. Catalyzes the isomerization between 2-isopropylmalate and 3-isopropylmalate, via the formation of 2-isopropylmaleate. The protein is 3-isopropylmalate dehydratase large subunit of Bordetella pertussis (strain Tohama I / ATCC BAA-589 / NCTC 13251).